Consider the following 214-residue polypeptide: Peptide methionine sulfoxide reductase MsrA 2 (214 aa).

Residue Cys45 is part of the active site.

It belongs to the MsrA Met sulfoxide reductase family.

The catalysed reaction is L-methionyl-[protein] + [thioredoxin]-disulfide + H2O = L-methionyl-(S)-S-oxide-[protein] + [thioredoxin]-dithiol. The enzyme catalyses [thioredoxin]-disulfide + L-methionine + H2O = L-methionine (S)-S-oxide + [thioredoxin]-dithiol. Its function is as follows. Has an important function as a repair enzyme for proteins that have been inactivated by oxidation. Catalyzes the reversible oxidation-reduction of methionine sulfoxide in proteins to methionine. The protein is Peptide methionine sulfoxide reductase MsrA 2 (msrA2) of Synechocystis sp. (strain ATCC 27184 / PCC 6803 / Kazusa).